The chain runs to 356 residues: Putative ankyrin repeat protein R599 (356 aa).

6 ANK repeats span residues 111-143 (NDDI…FCDN), 152-182 (RLEK…NVNT), 183-213 (HNYE…KLSD), 215-238 (KRKI…ELEV), 239-266 (NFDD…GANI), and 267-298 (NSIP…DINN).

This is Putative ankyrin repeat protein R599 from Acanthamoeba polyphaga (Amoeba).